A 207-amino-acid chain; its full sequence is Ribosomal RNA small subunit methyltransferase G (207 aa).

S-adenosyl-L-methionine contacts are provided by residues Gly-75, Phe-80, Leu-126–Glu-127, and Arg-140.

The protein belongs to the methyltransferase superfamily. RNA methyltransferase RsmG family.

Its subcellular location is the cytoplasm. The catalysed reaction is guanosine(527) in 16S rRNA + S-adenosyl-L-methionine = N(7)-methylguanosine(527) in 16S rRNA + S-adenosyl-L-homocysteine. Its function is as follows. Specifically methylates the N7 position of guanine in position 527 of 16S rRNA. This chain is Ribosomal RNA small subunit methyltransferase G, found in Erythrobacter litoralis (strain HTCC2594).